Reading from the N-terminus, the 368-residue chain is Probable staphylococcal-like nuclease CAN2 (368 aa).

Gly-2 is lipidated: N-myristoyl glycine. Residue Cys-7 is the site of S-palmitoyl cysteine attachment. Residues 16–56 (DHYPYYKPTSRPHYQPPHYHGQPAAPPAPLQQQHLGPHGVT) are disordered. The span at 27-38 (PHYQPPHYHGQP) shows a compositional bias: low complexity. The region spanning 168–344 (NTLPVYDKCI…RAANRGLWAS (177 aa)) is the TNase-like domain. Residue Asp-181 participates in Ca(2+) binding. Arg-251 is an active-site residue. Residue Asp-256 participates in Ca(2+) binding. Catalysis depends on residues Glu-259 and Arg-293.

It belongs to the thermonuclease family. Ca(2+) serves as cofactor.

The protein localises to the cell membrane. Enzyme that catalyzes the hydrolysis of both DNA and RNA at the 5' position of the phosphodiester bond. The chain is Probable staphylococcal-like nuclease CAN2 from Oryza sativa subsp. japonica (Rice).